We begin with the raw amino-acid sequence, 407 residues long: Phosphopentomutase (407 aa).

Asp-10, Asp-306, His-311, Asp-347, His-348, and His-359 together coordinate Mn(2+).

The protein belongs to the phosphopentomutase family. Mn(2+) serves as cofactor.

The protein localises to the cytoplasm. The catalysed reaction is 2-deoxy-alpha-D-ribose 1-phosphate = 2-deoxy-D-ribose 5-phosphate. It catalyses the reaction alpha-D-ribose 1-phosphate = D-ribose 5-phosphate. Its pathway is carbohydrate degradation; 2-deoxy-D-ribose 1-phosphate degradation; D-glyceraldehyde 3-phosphate and acetaldehyde from 2-deoxy-alpha-D-ribose 1-phosphate: step 1/2. Functionally, isomerase that catalyzes the conversion of deoxy-ribose 1-phosphate (dRib-1-P) and ribose 1-phosphate (Rib-1-P) to deoxy-ribose 5-phosphate (dRib-5-P) and ribose 5-phosphate (Rib-5-P), respectively. This is Phosphopentomutase from Salmonella arizonae (strain ATCC BAA-731 / CDC346-86 / RSK2980).